A 639-amino-acid chain; its full sequence is MLTLYLFTATCCFVCALPRQAQVDTAICHHTWPMCSDVPHPTSSAHNTALSSSHAISIEHRLLHSPSPPRENIRHSMRCRRRAIASSASTPVSHTQPLAANHRRSRITYATTDPTNSPTASPAKSDKLEADADPALHRRPDSLLRHLFQPCHAQRGTSNRATSQRASLNAVHHKLCGAMISSSWSTTCTPAIMDLPSLSVELSAGHKKKETPTEGGWGGEEGEDDVLATIRNTLSAPTSPAAATTHRLSFPEGSSFCLTAVSEYSQRLTSTAALTPPPPAVAAPFSFSSTVSETGAFPQSTAGRTRVDDTAVVTAGDPRSPVTHVTLLQIFRLRSSLLTSRSGDTLRGGEHEAIPKVASLFWTLLKATQTVEITHKTPSADSHRNPQKYTDRPQRLLLTALAIWQRTYNNTRADHAPQVRLLGNILTYRRPQTATASAKAHTQQQPEEPKGQQIWAQTAGQAAPHGDEPHSDGELRRESHSAPPTSRTLPDTILAVKRRSVAQRSHVRLDAKPGLNDRDGFRRRLLLPLSGYFRANELRNQQFMGYGTENGLKNTCLTRPLGAAGGVRETIGERQDRDVADSATQRVFHTLYAALQTVRVWYTALGTAWRTSGSRTRDSLFDGPRRRDRQAGRLRRLEL.

An N-terminal signal peptide occupies residues 1–16; it reads MLTLYLFTATCCFVCA. Disordered stretches follow at residues 80-128 and 432-488; these read RRRA…SDKL and QTAT…TSRT. 2 stretches are compositionally biased toward polar residues: residues 108–122 and 432–446; these read TYAT…TASP and QTAT…QQQP. Over residues 465 to 480 the composition is skewed to basic and acidic residues; the sequence is HGDEPHSDGELRRESH.

This is an uncharacterized protein from Human cytomegalovirus (strain Merlin) (HHV-5).